Here is a 489-residue protein sequence, read N- to C-terminus: Monocarboxylate transporter 2 (489 aa).

Topologically, residues 1-21 (MPSESSVKATAAPPPFPLPPD) are cytoplasmic. The chain crosses the membrane as a helical span at residues 22–42 (GGWGWVVVCASFISIGFSYAF). At 43 to 65 (PKAVTVFFNDIKDIFKTTSSQIA) the chain is on the extracellular side. The helical transmembrane segment at 66 to 86 (WISSIMLAVMYAGGPISSVLV) threads the bilayer. Topologically, residues 87 to 95 (NNYGSRPVV) are cytoplasmic. The helical transmembrane segment at 96-116 (IVGGLLCCTGMILASFSSSVI) threads the bilayer. At 117–121 (ELYLT) the chain is on the extracellular side. Residues 122 to 142 (VGFIGGLGLAFNLQPALTIIG) form a helical membrane-spanning segment. Topologically, residues 143-154 (KYFYRKRPLANG) are cytoplasmic. The chain crosses the membrane as a helical span at residues 155-175 (FAMAGSPVFLSTLAPFNQFLF). Topologically, residues 176–179 (NSYG) are extracellular. Residues 180-200 (WKGSFLILGAIFLHSCVAGCL) form a helical membrane-spanning segment. Residues 201-250 (MRPVGPSPRAAKSKSKVGSRQDSSTKRLSKVSTAEKINRFLDFGLFTHRG) are Cytoplasmic-facing. Positions 206–227 (PSPRAAKSKSKVGSRQDSSTKR) are disordered. A helical membrane pass occupies residues 251-271 (FLIYLSGNVVLFLGMFAPIIF). Over 272–286 (LAPYAKDKGVDDYNS) the chain is Extracellular. The helical transmembrane segment at 287-307 (AFLLSVMAFTDMFARPSVGLI) threads the bilayer. Topologically, residues 308–316 (ANTSLIRPR) are cytoplasmic. A helical membrane pass occupies residues 317–337 (IQYLFSVAIMFTGICHLLCPL). Residues 338–342 (AHSYT) are Extracellular-facing. Residues 343–363 (ALVVYVIFFGIGFGSISSLLF) traverse the membrane as a helical segment. Over 364 to 377 (ECLMDQVGASRFSS) the chain is Cytoplasmic. A helical transmembrane segment spans residues 378 to 398 (AVGLVTIVECCPVLFGPPLAG). Topologically, residues 399 to 410 (KLLDITGQYKYL) are extracellular. Residues 411 to 431 (YIASGIVVLSSGIYLLICNAI) form a helical membrane-spanning segment. Over 432–489 (NYRLLEKERKREKARRKKSASQASKEMEALSRSKQDDVTVKVSNTHNPPSDRDKESSI) the chain is Cytoplasmic. Positions 441-489 (KREKARRKKSASQASKEMEALSRSKQDDVTVKVSNTHNPPSDRDKESSI) are disordered. 2 stretches are compositionally biased toward basic and acidic residues: residues 456 to 470 (KEMEALSRSKQDDVT) and 480 to 489 (PSDRDKESSI).

The protein belongs to the major facilitator superfamily. Monocarboxylate porter (TC 2.A.1.13) family. Homodimer. Interacts with GRID2IP. Interacts with EMB; interaction mediates SLC16A7 targeting to the plasma membrane. Interacts with isoform 2 of BSG. As to expression, detected in brain and kidney (at protein level).

Its subcellular location is the cell membrane. It is found in the basolateral cell membrane. The protein resides in the cytoplasm. It catalyses the reaction 3-methyl-2-oxobutanoate(out) + H(+)(out) = 3-methyl-2-oxobutanoate(in) + H(+)(in). The catalysed reaction is (S)-lactate(in) + H(+)(in) = (S)-lactate(out) + H(+)(out). The enzyme catalyses acetoacetate(out) + H(+)(out) = acetoacetate(in) + H(+)(in). It carries out the reaction (R)-3-hydroxybutanoate(out) + H(+)(out) = (R)-3-hydroxybutanoate(in) + H(+)(in). It catalyses the reaction 4-methyl-2-oxopentanoate(out) + H(+)(out) = 4-methyl-2-oxopentanoate(in) + H(+)(in). The catalysed reaction is pyruvate(out) + H(+)(out) = pyruvate(in) + H(+)(in). The enzyme catalyses (S)-3-hydroxybutanoate(out) + H(+)(out) = (S)-3-hydroxybutanoate(in) + H(+)(in). Its activity is regulated as follows. Transport activity exhibits steep dependence on substrate concentration. Substrate concentration sensitivity of SLC16A7 arises from the strong inter-subunit cooperativity of the SLC16A7 dimer during transport. Inhibited by AR-C155858. In terms of biological role, proton-coupled monocarboxylate symporter. Catalyzes the rapid transport across the plasma membrane of monocarboxylates such as L-lactate, pyruvate and ketone bodies, acetoacetate, beta-hydroxybutyrate and acetate. Dimerization is functionally required and both subunits work cooperatively in transporting substrate. This Rattus norvegicus (Rat) protein is Monocarboxylate transporter 2 (Slc16a7).